Consider the following 174-residue polypeptide: Peroxisome assembly protein 22 (174 aa).

A helical membrane pass occupies residues 9–27 (GYLAIIAAVSIGAAAYLWW).

It belongs to the peroxin-22 family.

Its subcellular location is the peroxisome membrane. Involved in peroxisome biogenesis. In Candida glabrata (strain ATCC 2001 / BCRC 20586 / JCM 3761 / NBRC 0622 / NRRL Y-65 / CBS 138) (Yeast), this protein is Peroxisome assembly protein 22 (PEX22).